Here is a 402-residue protein sequence, read N- to C-terminus: Secreted RxLR effector protein 73 (402 aa).

An N-terminal signal peptide occupies residues 1–23 (MRLLHVVVATVSLTGAITSLIAA). Asn-27 carries an N-linked (GlcNAc...) asparagine glycan. The short motif at 104 to 107 (RVLR) is the RxLR element. 5 N-linked (GlcNAc...) asparagine glycosylation sites follow: Asn-111, Asn-134, Asn-143, Asn-165, and Asn-286.

Belongs to the RxLR effector family.

Its subcellular location is the secreted. It is found in the host cell. In terms of biological role, secreted effector that completely suppresses the host cell death induced by cell death-inducing proteins. The chain is Secreted RxLR effector protein 73 from Plasmopara viticola (Downy mildew of grapevine).